A 258-amino-acid chain; its full sequence is Indole-3-glycerol phosphate synthase (258 aa).

Belongs to the TrpC family.

The enzyme catalyses 1-(2-carboxyphenylamino)-1-deoxy-D-ribulose 5-phosphate + H(+) = (1S,2R)-1-C-(indol-3-yl)glycerol 3-phosphate + CO2 + H2O. It participates in amino-acid biosynthesis; L-tryptophan biosynthesis; L-tryptophan from chorismate: step 4/5. In Campylobacter jejuni subsp. jejuni serotype O:23/36 (strain 81-176), this protein is Indole-3-glycerol phosphate synthase.